We begin with the raw amino-acid sequence, 38 residues long: Photosystem II reaction center protein L (38 aa).

Residues 17 to 37 (SLYWGLLLIFVLAVLFSNYFF) form a helical membrane-spanning segment.

This sequence belongs to the PsbL family. As to quaternary structure, PSII is composed of 1 copy each of membrane proteins PsbA, PsbB, PsbC, PsbD, PsbE, PsbF, PsbH, PsbI, PsbJ, PsbK, PsbL, PsbM, PsbT, PsbX, PsbY, PsbZ, Psb30/Ycf12, at least 3 peripheral proteins of the oxygen-evolving complex and a large number of cofactors. It forms dimeric complexes.

Its subcellular location is the plastid. It is found in the chloroplast thylakoid membrane. Its function is as follows. One of the components of the core complex of photosystem II (PSII). PSII is a light-driven water:plastoquinone oxidoreductase that uses light energy to abstract electrons from H(2)O, generating O(2) and a proton gradient subsequently used for ATP formation. It consists of a core antenna complex that captures photons, and an electron transfer chain that converts photonic excitation into a charge separation. This subunit is found at the monomer-monomer interface and is required for correct PSII assembly and/or dimerization. This is Photosystem II reaction center protein L from Ananas comosus (Pineapple).